The chain runs to 95 residues: Feather keratin B-4 (95 aa).

N-acetylserine is present on Ser1.

Belongs to the avian keratin family. In terms of assembly, the avian keratins (F-ker, S-ker, C-ker and B-ker) are a complex mixture of very similar polypeptides.

This is Feather keratin B-4 from Anas platyrhynchos (Mallard).